The primary structure comprises 236 residues: Dolichol-phosphate mannosyltransferase (236 aa).

GDP-alpha-D-mannose is bound by residues P9, Y11, E13, I40, D42, D95, A96, D97, R124, V160, R211, and K217. D97 is a Mg(2+) binding site. D97 contributes to the Mn(2+) binding site.

This sequence belongs to the glycosyltransferase 2 family. As to quaternary structure, component of the dolichol-phosphate mannose (DPM) synthase complex composed of dpm1, dpm2 and dpm3. Mg(2+) is required as a cofactor. Mn(2+) serves as cofactor. The cofactor is Ca(2+).

The protein resides in the endoplasmic reticulum. It carries out the reaction a di-trans,poly-cis-dolichyl phosphate + GDP-alpha-D-mannose = a di-trans,poly-cis-dolichyl beta-D-mannosyl phosphate + GDP. It functions in the pathway protein modification; protein glycosylation. Its function is as follows. Transfers mannose from GDP-mannose to dolichol monophosphate to form dolichol phosphate mannose (Dol-P-Man) which is the mannosyl donor in pathways leading to N-glycosylation, glycosyl phosphatidylinositol membrane anchoring, and O-mannosylation of proteins. The sequence is that of Dolichol-phosphate mannosyltransferase from Schizosaccharomyces pombe (strain 972 / ATCC 24843) (Fission yeast).